Here is a 276-residue protein sequence, read N- to C-terminus: Ribosomal RNA small subunit methyltransferase A (276 aa).

S-adenosyl-L-methionine contacts are provided by Asn-27, Leu-29, Gly-54, Glu-75, Asp-101, and Asn-122.

This sequence belongs to the class I-like SAM-binding methyltransferase superfamily. rRNA adenine N(6)-methyltransferase family. RsmA subfamily.

It localises to the cytoplasm. The enzyme catalyses adenosine(1518)/adenosine(1519) in 16S rRNA + 4 S-adenosyl-L-methionine = N(6)-dimethyladenosine(1518)/N(6)-dimethyladenosine(1519) in 16S rRNA + 4 S-adenosyl-L-homocysteine + 4 H(+). In terms of biological role, specifically dimethylates two adjacent adenosines (A1518 and A1519) in the loop of a conserved hairpin near the 3'-end of 16S rRNA in the 30S particle. May play a critical role in biogenesis of 30S subunits. This chain is Ribosomal RNA small subunit methyltransferase A, found in Brucella abortus (strain S19).